A 268-amino-acid polypeptide reads, in one-letter code: Undecaprenyl-diphosphatase (268 aa).

8 consecutive transmembrane segments (helical) span residues Val-9 to Leu-29, Phe-47 to Leu-67, Phe-83 to Ser-103, Leu-107 to Leu-127, Phe-144 to Val-164, Ala-184 to Leu-204, Ile-218 to Leu-238, and Phe-246 to Met-266.

This sequence belongs to the UppP family.

Its subcellular location is the cell inner membrane. The enzyme catalyses di-trans,octa-cis-undecaprenyl diphosphate + H2O = di-trans,octa-cis-undecaprenyl phosphate + phosphate + H(+). In terms of biological role, catalyzes the dephosphorylation of undecaprenyl diphosphate (UPP). Confers resistance to bacitracin. The polypeptide is Undecaprenyl-diphosphatase (Rhodopseudomonas palustris (strain HaA2)).